A 798-amino-acid chain; its full sequence is Suppressor of spindle checkpoint defect 1 (798 aa).

A coiled-coil region spans residues 339–359 (ESIQQSQVNVDDMCNRIANME).

The protein belongs to the APC5 family. As to quaternary structure, the APC/C complex is probably composed of at least 12 subunits: apc-2, apc-10, apc-11, cdc-26, emb-1, emb-27, emb-30, mat-1, mat-2, mat-3, such-1 and gfi-3. In terms of tissue distribution, expressed in head neurons, vulval precursor cells and in mature sperm stored in the spermatheca.

It functions in the pathway protein modification; protein ubiquitination. In terms of biological role, probable component of the anaphase promoting complex/cyclosome (APC/C), a cell cycle-regulated E3 ubiquitin ligase that controls progression through mitosis and the G1 phase of the cell cycle. The APC/C complex acts by mediating ubiquitination and subsequent degradation of target proteins. Required for the metaphase to anaphase transition in meiosis. Plays a role in the segregation of DNA and centrioles during meiosis in male germ cells. This Caenorhabditis elegans protein is Suppressor of spindle checkpoint defect 1.